Consider the following 283-residue polypeptide: Elongation factor Ts (283 aa).

The interval 80-83 is involved in Mg(2+) ion dislocation from EF-Tu; the sequence is TDFV.

This sequence belongs to the EF-Ts family.

It localises to the cytoplasm. Its function is as follows. Associates with the EF-Tu.GDP complex and induces the exchange of GDP to GTP. It remains bound to the aminoacyl-tRNA.EF-Tu.GTP complex up to the GTP hydrolysis stage on the ribosome. The sequence is that of Elongation factor Ts from Salmonella gallinarum (strain 287/91 / NCTC 13346).